Consider the following 224-residue polypeptide: Octanoyl-[acyl-carrier-protein]:protein N-octanoyltransferase LIPT2, mitochondrial (224 aa).

Residues 37-217 (SNIPNTLLLC…AFTEQFNCTL (181 aa)) enclose the BPL/LPL catalytic domain. Substrate-binding positions include 81–88 (RGGLITFH), 147–149 (AIG), and 160–162 (GLA). The Acyl-thioester intermediate role is filled by Cys178.

The protein belongs to the LipB family.

It is found in the mitochondrion. It catalyses the reaction octanoyl-[ACP] + L-lysyl-[protein] = N(6)-octanoyl-L-lysyl-[protein] + holo-[ACP] + H(+). It participates in protein modification; protein lipoylation via endogenous pathway; protein N(6)-(lipoyl)lysine from octanoyl-[acyl-carrier-protein]: step 1/2. Catalyzes the transfer of endogenously produced octanoic acid from octanoyl-acyl-carrier-protein (octanoyl-ACP) onto the lipoyl domains of lipoate-dependent enzymes such as the protein H of the glycine cleavage system (GCSH). Lipoyl-ACP can also act as a substrate although octanoyl-ACP is likely to be the physiological substrate. The chain is Octanoyl-[acyl-carrier-protein]:protein N-octanoyltransferase LIPT2, mitochondrial (lipt2) from Danio rerio (Zebrafish).